We begin with the raw amino-acid sequence, 75 residues long: Dermaseptin-SP5 (75 aa).

The first 22 residues, 1 to 22 (MAFLKKSLFLVLFLGLVSLSMC), serve as a signal peptide directing secretion. Positions 23 to 45 (EEEKRENEVEEEQEDDEQSELRR) are excised as a propeptide. Residues 26–46 (KRENEVEEEQEDDEQSELRRS) form a disordered region. Positions 30-40 (EVEEEQEDDEQ) are enriched in acidic residues. Position 72 is a proline amide (Pro-72). A propeptide spanning residues 74–75 (EQ) is cleaved from the precursor.

The protein belongs to the frog skin active peptide (FSAP) family. Dermaseptin subfamily. In terms of tissue distribution, expressed by the skin glands.

The protein resides in the secreted. Its subcellular location is the target cell membrane. Its function is as follows. Antimicrobial peptide with weak activity against Gram-positive and Gram-negative bacteria and fungi. Has been tested against E.coli (MIC=96.06-256 uM), S.aureus (MIC&gt;192.12 uM), K.pneumoniae (MIC&gt;189.00 uM) and C.albicans (MIC=384.24-1024 uM). Probably acts by disturbing membrane functions with its alpha-helical amphipathic structure. May penetrate bacterial membranes, but stay at the mammalian membrane surface. Does not show hemolytic activity. Does not interact at all with cardiolipin. This chain is Dermaseptin-SP5, found in Agalychnis spurrelli (Gliding leaf frog).